Reading from the N-terminus, the 1669-residue chain is Collagen alpha-3(IV) chain (1669 aa).

The N-terminal stretch at 1-28 (MHSKTAPRFLVFLLLTLLLLLAASPVAS) is a signal peptide. The segment at 29–42 (KGCVCKGKGQCLCA) is 7S domain. The interval 43 to 1436 (GTKGEKGEKG…KGNPGDRGTP (1394 aa)) is triple-helical region. Disordered regions lie at residues 44–473 (TKGE…EPGS) and 500–1439 (PGGR…PATG). A compositionally biased stretch (low complexity) spans 54-68 (PGSPGFPGQKGFPGP). Residues 105–114 (PGLPGLPGHP) show a composition bias toward pro residues. N-linked (GlcNAc...) asparagine glycosylation is present at N126. Residues 188–200 (PGFPGPAGPPGPP) are compositionally biased toward pro residues. The span at 202–211 (FFGLPGAMGP) shows a compositional bias: low complexity. N253 carries an N-linked (GlcNAc...) asparagine glycan. The span at 255–269 (SDFKGEKGDEGERGE) shows a compositional bias: basic and acidic residues. Low complexity-rich tracts occupy residues 279–290 (PGDSYGSEKGAP) and 382–393 (SPGLSRPGLRGP). The segment covering 416–437 (PPGPLGCPGSPGPPGPPGPPGC) has biased composition (pro residues). Residues 551–560 (NPGDPGLRGL) show a composition bias toward low complexity. Pro residues-rich tracts occupy residues 596 to 617 (PPGP…PPGY) and 654 to 665 (LGPPGPPGPPGQ). Positions 666–684 (AGPRGLPGLPGPVGKCDPG) are enriched in low complexity. The segment covering 778 to 787 (GTPGRGGLDG) has biased composition (gly residues). The Cell attachment site motif lies at 830–832 (RGD). The segment covering 861–876 (CPGEMGPPGQKGYPGA) has biased composition (low complexity). Basic and acidic residues predominate over residues 922-939 (KGEKGRPGAKGERGEKGK). Over residues 970–985 (RGNPGLPGPKGLEGLP) the composition is skewed to low complexity. Positions 994–996 (RGD) match the Cell attachment site motif. A compositionally biased stretch (low complexity) spans 1092-1103 (SGPAGPDGAPGS). Over residues 1128–1146 (PGPPGSTGPPGPPGLPGLP) the composition is skewed to pro residues. Positions 1152–1154 (RGD) match the Cell attachment site motif. Over residues 1228–1248 (PGAIIPGPKGDRGLPGLRGNP) the composition is skewed to low complexity. Pro residues predominate over residues 1250 to 1259 (EPGPPGPPGP). The Cell attachment site signature appears at 1304 to 1306 (RGD). Residues 1333 to 1343 (PVGPKGPPGPR) show a composition bias toward pro residues. Composition is skewed to low complexity over residues 1366 to 1379 (QPGM…LGLP) and 1402 to 1429 (PAGT…LKGN). The epitope recognized by Goodpasture antibodies stretch occupies residues 1425–1443 (GLKGNPGDRGTPATGTRMR). The 225-residue stretch at 1444–1668 (GFIFTRHSQT…SRCQVCMKKR (225 aa)) folds into the Collagen IV NC1 domain. Intrachain disulfides connect C1459–C1550, C1492–C1547, C1504–C1510, C1569–C1664, C1603–C1661, and C1615–C1621. The tract at residues 1478-1556 (NKRAHGQDLG…CTVCEGPAMA (79 aa)) is required for the anti-angiogenic activity of tumstatin. Residue M1532 forms an S-Lysyl-methionine sulfilimine (Met-Lys) (interchain with K-1650) linkage. Residues 1609–1627 (ASPFIECHGRGTCNYYSNS) form a required for the anti-tumor cell activity of tumstatin region. Residue K1650 forms an S-Lysyl-methionine sulfilimine (Lys-Met) (interchain with M-1532) linkage.

This sequence belongs to the type IV collagen family. In terms of assembly, there are six type IV collagen isoforms, alpha 1(IV)-alpha 6(IV), each of which can form a triple helix structure with 2 other chains to generate type IV collagen network. The alpha 3(IV) chain forms a triple helical protomer with alpha 4(IV) and alpha 5(IV); this triple helical structure dimerizes through NC1-NC1 domain interactions such that the alpha 3(IV), alpha 4(IV) and alpha 5(IV) chains of one protomer connect with the alpha 5(IV), alpha 4(IV) and alpha 3(IV) chains of the opposite promoter, respectively. Interacts with ITGB3. Associates with LAMB2 at the neuromuscular junction and in GBM. In terms of processing, prolines at the third position of the tripeptide repeating unit (G-X-Y) are hydroxylated in some or all of the chains. Post-translationally, type IV collagens contain numerous cysteine residues which are involved in inter- and intramolecular disulfide bonding. 12 of these, located in the NC1 domain, are conserved in all known type IV collagens. The trimeric structure of the NC1 domains is stabilized by covalent bonds between Lys and Met residues. In terms of processing, phosphorylated. Thought to be phosphorylated by CERT, but CERT does not have kinase activity. As to expression, highly expressed in kidney and lung. Detected at lower levels in heart, muscle and skin.

The protein localises to the secreted. It localises to the extracellular space. It is found in the extracellular matrix. Its subcellular location is the basement membrane. Functionally, type IV collagen is the major structural component of glomerular basement membranes (GBM), forming a 'chicken-wire' meshwork together with laminins, proteoglycans and entactin/nidogen. In terms of biological role, tumstatin, a cleavage fragment corresponding to the collagen alpha 3(IV) NC1 domain, possesses both anti-angiogenic and anti-tumor cell activity; these two anti-tumor properties may be regulated via RGD-independent ITGB3-mediated mechanisms. This chain is Collagen alpha-3(IV) chain, found in Mus musculus (Mouse).